Reading from the N-terminus, the 378-residue chain is Probable endopolygalacturonase AFUB_016610 (378 aa).

The first 19 residues, 1-19, serve as a signal peptide directing secretion; sequence MLKLMGSLVLLASAAEVIA. Positions 20-35 are excised as a propeptide; that stretch reads SPAAEPVAPSTTLEKR. An intrachain disulfide couples cysteine 38 to cysteine 56. PbH1 repeat units follow at residues 147-169, 170-200, and 201-222; these read TSSSSITDLHILNTPVQAVSING, CDGLTITDITIDNSAGDTQGGHNTDAFDIGS, and SSNIIISGAKVYNQDDCVAVNS. Aspartate 215 serves as the catalytic Proton donor. Residues cysteine 217 and cysteine 233 are joined by a disulfide bond. Histidine 237 is an active-site residue. PbH1 repeat units follow at residues 252–273 and 281–303; these read VENVSFTNSQVTNSDNGLRIKA and IKGVTYSGITLSSIRKYGILIEQ. Residue asparagine 254 is glycosylated (N-linked (GlcNAc...) asparagine). A glycan (N-linked (GlcNAc...) asparagine) is linked at asparagine 327. Cysteine 345 and cysteine 350 are joined by a disulfide. A glycan (N-linked (GlcNAc...) asparagine) is linked at asparagine 352. A disulfide bond links cysteine 369 and cysteine 378.

Belongs to the glycosyl hydrolase 28 family.

The protein resides in the secreted. The catalysed reaction is (1,4-alpha-D-galacturonosyl)n+m + H2O = (1,4-alpha-D-galacturonosyl)n + (1,4-alpha-D-galacturonosyl)m.. In terms of biological role, involved in maceration and soft-rotting of plant tissue. Hydrolyzes the 1,4-alpha glycosidic bonds of de-esterified pectate in the smooth region of the plant cell wall. The protein is Probable endopolygalacturonase AFUB_016610 of Aspergillus fumigatus (strain CBS 144.89 / FGSC A1163 / CEA10) (Neosartorya fumigata).